Consider the following 102-residue polypeptide: Small ribosomal subunit protein bS6 (102 aa).

It belongs to the bacterial ribosomal protein bS6 family.

Its function is as follows. Binds together with bS18 to 16S ribosomal RNA. The chain is Small ribosomal subunit protein bS6 (rpsF) from Deinococcus radiodurans (strain ATCC 13939 / DSM 20539 / JCM 16871 / CCUG 27074 / LMG 4051 / NBRC 15346 / NCIMB 9279 / VKM B-1422 / R1).